A 93-amino-acid chain; its full sequence is Protein VNG_0358C (93 aa).

In Halobacterium salinarum (strain ATCC 700922 / JCM 11081 / NRC-1) (Halobacterium halobium), this protein is Protein VNG_0358C.